A 185-amino-acid polypeptide reads, in one-letter code: Elongation factor P (185 aa).

This sequence belongs to the elongation factor P family.

It localises to the cytoplasm. It participates in protein biosynthesis; polypeptide chain elongation. Its function is as follows. Involved in peptide bond synthesis. Stimulates efficient translation and peptide-bond synthesis on native or reconstituted 70S ribosomes in vitro. Probably functions indirectly by altering the affinity of the ribosome for aminoacyl-tRNA, thus increasing their reactivity as acceptors for peptidyl transferase. The chain is Elongation factor P from Oleidesulfovibrio alaskensis (strain ATCC BAA-1058 / DSM 17464 / G20) (Desulfovibrio alaskensis).